The sequence spans 381 residues: Alkanesulfonate monooxygenase (381 aa).

The protein belongs to the SsuD family. As to quaternary structure, homotetramer.

It catalyses the reaction an alkanesulfonate + FMNH2 + O2 = an aldehyde + FMN + sulfite + H2O + 2 H(+). Functionally, catalyzes the desulfonation of aliphatic sulfonates. This Escherichia coli O9:H4 (strain HS) protein is Alkanesulfonate monooxygenase.